Here is a 143-residue protein sequence, read N- to C-terminus: Large ribosomal subunit protein uL11 (143 aa).

Belongs to the universal ribosomal protein uL11 family. Part of the ribosomal stalk of the 50S ribosomal subunit. Interacts with L10 and the large rRNA to form the base of the stalk. L10 forms an elongated spine to which L12 dimers bind in a sequential fashion forming a multimeric L10(L12)X complex. In terms of processing, one or more lysine residues are methylated.

Its function is as follows. Forms part of the ribosomal stalk which helps the ribosome interact with GTP-bound translation factors. The polypeptide is Large ribosomal subunit protein uL11 (Novosphingobium aromaticivorans (strain ATCC 700278 / DSM 12444 / CCUG 56034 / CIP 105152 / NBRC 16084 / F199)).